The primary structure comprises 241 residues: Peroxisomal membrane protein 11C (241 aa).

The Cytoplasmic portion of the chain corresponds to 1–124 (MASLSGLASA…ARVLHVDSSR (124 aa)). A helical membrane pass occupies residues 125-149 (WWTLSTTLWALSLLLGVARSLWMLL). The Lumenal segment spans residues 150-211 (KLRQRLRSPT…GVLWAGRFPP (62 aa)). The chain crosses the membrane as a helical span at residues 212–227 (WLVGLMGTISSILSMY). The Cytoplasmic portion of the chain corresponds to 228 to 241 (QAARAGGQAEATTP).

Belongs to the peroxin-11 family. In terms of assembly, homodimer. Heterodimer with either PEX11A or PEX11B. Interacts with FIS1.

Its subcellular location is the peroxisome membrane. Functionally, promotes membrane protrusion and elongation on the peroxisomal surface. The polypeptide is Peroxisomal membrane protein 11C (PEX11G) (Homo sapiens (Human)).